Reading from the N-terminus, the 268-residue chain is Small ribosomal subunit protein uS10m (268 aa).

The N-terminal 64 residues, 1–64, are a transit peptide targeting the mitochondrion; the sequence is MIIRPVVRSL…RITTTTEAPK (64 aa).

It belongs to the universal ribosomal protein uS10 family. In terms of assembly, component of the mitochondrial small ribosomal subunit (mt-SSU). Mature N.crassa 74S mitochondrial ribosomes consist of a small (37S) and a large (54S) subunit. The 37S small subunit contains a 16S ribosomal RNA (16S mt-rRNA) and 32 different proteins. The 54S large subunit contains a 23S rRNA (23S mt-rRNA) and 42 different proteins.

It localises to the mitochondrion. Component of the mitochondrial ribosome (mitoribosome), a dedicated translation machinery responsible for the synthesis of mitochondrial genome-encoded proteins, including at least some of the essential transmembrane subunits of the mitochondrial respiratory chain. The mitoribosomes are attached to the mitochondrial inner membrane and translation products are cotranslationally integrated into the membrane. The protein is Small ribosomal subunit protein uS10m (mrp-10) of Neurospora crassa (strain ATCC 24698 / 74-OR23-1A / CBS 708.71 / DSM 1257 / FGSC 987).